Reading from the N-terminus, the 300-residue chain is Interferon-stimulated gene 20 kDa protein (300 aa).

Mn(2+)-binding residues include Asp-11, Glu-13, Asp-90, and His-93.

This sequence belongs to the exonuclease superfamily. As to quaternary structure, associates with PML and SP100 in the PML NB complex. Associates with survival motor neuron protein (SMN)-containing macromolecular nuclear complexes and U1 and U2 snRNAs and U3 snoRNA. It depends on Mn(2+) as a cofactor.

The protein localises to the nucleus. It is found in the nucleolus. Its subcellular location is the cytoplasm. It localises to the cajal body. The protein resides in the P-body. The enzyme catalyses Exonucleolytic cleavage in the 3'- to 5'-direction to yield nucleoside 5'-phosphates.. Functionally, interferon-induced antiviral exoribonuclease that acts mainly on single-stranded RNA. Inhibition of several viruses does not involve the degradation of viral RNAs, but rather the inhibition of translation of viral proteins. Exerts a translational control over a large panel of non-self RNA substrates while sparing endogenous transcripts. This activity correlates with the protein's ability to localize in cytoplasmic processing bodies. May also act as master regulator of over hundred interferon stimulated genes leading to viral genome translation inhibition. May play additional roles in the maturation of snRNAs and rRNAs, and in ribosome biogenesis. This Mus musculus (Mouse) protein is Interferon-stimulated gene 20 kDa protein (Isg20).